The chain runs to 332 residues: 2,3-diketo-L-gulonate reductase (332 aa).

Histidine 44 acts as the Proton donor in catalysis. NAD(+)-binding positions include 168 to 174 (ITMVDMS), 224 to 225 (WK), and 304 to 306 (GHE).

It belongs to the LDH2/MDH2 oxidoreductase family. DlgD subfamily. In terms of assembly, homodimer.

The protein resides in the cytoplasm. The catalysed reaction is 3-dehydro-L-gulonate + NAD(+) = 2,3-dioxo-L-gulonate + NADH + H(+). It catalyses the reaction 3-dehydro-L-gulonate + NADP(+) = 2,3-dioxo-L-gulonate + NADPH + H(+). Functionally, catalyzes the reduction of 2,3-diketo-L-gulonate in the presence of NADH, to form 3-keto-L-gulonate. This is 2,3-diketo-L-gulonate reductase from Salmonella paratyphi C (strain RKS4594).